Consider the following 719-residue polypeptide: Polyribonucleotide nucleotidyltransferase (719 aa).

Asp491 and Asp497 together coordinate Mg(2+). In terms of domain architecture, KH spans Pro558 to Ile617. Residues Gly627–Lys695 form the S1 motif domain.

This sequence belongs to the polyribonucleotide nucleotidyltransferase family. It depends on Mg(2+) as a cofactor.

Its subcellular location is the cytoplasm. The catalysed reaction is RNA(n+1) + phosphate = RNA(n) + a ribonucleoside 5'-diphosphate. Functionally, involved in mRNA degradation. Catalyzes the phosphorolysis of single-stranded polyribonucleotides processively in the 3'- to 5'-direction. The protein is Polyribonucleotide nucleotidyltransferase of Bordetella bronchiseptica (strain ATCC BAA-588 / NCTC 13252 / RB50) (Alcaligenes bronchisepticus).